Reading from the N-terminus, the 27-residue chain is Augerpeptide hhe6.2 (27 aa).

3 cysteine pairs are disulfide-bonded: cysteine 4–cysteine 13, cysteine 8–cysteine 20, and cysteine 12–cysteine 27.

As to expression, expressed by the venom duct.

The protein resides in the secreted. In Hastula hectica (Sea snail), this protein is Augerpeptide hhe6.2.